We begin with the raw amino-acid sequence, 30 residues long: Phospholemman-like protein (30 aa).

This sequence belongs to the FXYD family. In terms of processing, phosphorylated by protein kinase a (PK-A) and protein kinase C (PK-C). Phosphorylated in response to insulin and adrenergic stimulation.

Its subcellular location is the microsome membrane. It localises to the endoplasmic reticulum membrane. Induces a hyperpolarization-activated chloride current when expressed in Xenopus oocytes. May have a functional role in muscle contraction. The protein is Phospholemman-like protein of Squalus acanthias (Spiny dogfish).